We begin with the raw amino-acid sequence, 127 residues long: Small ribosomal subunit protein bS6 (127 aa).

The disordered stretch occupies residues 102–127; the sequence is IMQGAEKGKSSRKEKVDAEAEASEEA. Residues 107–119 are compositionally biased toward basic and acidic residues; that stretch reads EKGKSSRKEKVDA.

Belongs to the bacterial ribosomal protein bS6 family.

Its function is as follows. Binds together with bS18 to 16S ribosomal RNA. In Coxiella burnetii (strain CbuK_Q154) (Coxiella burnetii (strain Q154)), this protein is Small ribosomal subunit protein bS6.